Here is a 44-residue protein sequence, read N- to C-terminus: Photosystem I reaction center subunit IX (44 aa).

A helical membrane pass occupies residues 7–27 (YLSTAPVLAILCVSFLAALLI).

The protein belongs to the PsaJ family.

The protein localises to the plastid. It localises to the chloroplast thylakoid membrane. Functionally, may help in the organization of the PsaE and PsaF subunits. This Pinus thunbergii (Japanese black pine) protein is Photosystem I reaction center subunit IX.